The sequence spans 203 residues: Tic20 family protein Ycf60 (203 aa).

The next 5 membrane-spanning stretches (helical) occupy residues 2 to 22 (IRLF…RLAL), 51 to 71 (TVPY…YVLP), 84 to 104 (IILP…VTFF), 131 to 151 (ILLF…PIEF), and 153 to 173 (ISFL…STIT).

The protein belongs to the Tic20 family.

The protein localises to the plastid. Its subcellular location is the chloroplast membrane. The sequence is that of Tic20 family protein Ycf60 (ycf60) from Pyropia yezoensis (Susabi-nori).